Reading from the N-terminus, the 4558-residue chain is Multifunctional-autoprocessing repeats-in-toxin (4558 aa).

A signal peptide spans 1–32; that stretch reads MVFYLIPKRRVWLMGKPFWRSVEYFFTGNYSA. RtxA repeat units lie at residues 114–131, 134–151, 154–170, 174–197, 200–217, 220–237, 268–285, 288–304, 594–611, 614–630, 634–651, 654–668, 751–763, 769–781, 792–808, 811–826, 830–845, 851–865, 868–885, 887–901, 906–920, 925–942, 944–960, 982–994, 1001–1016, 1041–1053, 1077–1089, 1097–1112, 1120–1132, 1135–1152, 1155–1169, 1173–1189, 1194–1209, 1211–1227, 1230–1246, 1252–1266, 1268–1285, 1306–1323, and 1325–1342; these read GAAG…GDVS, GAAA…GNVT, GAGG…QGNL, GAGA…GDVT, GAGA…GNIT, GAGA…GDIT, GVGG…GDIH, GGGA…GNDF, GAGG…GNVH, GGGI…FGNT, GGGA…GDLT, GAGL…SEQG, AGGA…MGEG, MLGG…HISN, ALGG…GNTL, MGGG…DGTT, MVGG…NGDT, GVGN…GQTL, MGAA…TSIA, MIGA…GEGN, MGGL…GNGD, MVAE…MSVA, MLAK…GTTL, MIGQ…KVGN, MVGK…DGTS, GKAN…GDGL, AAAK…HVGD, AGKG…GTTV, GNVM…GTTI, AKGK…LGVN, WGQA…DGDR, AKGE…GQEV, GEAN…DDYT, AWGK…GQNV, AKGE…GDSF, KGNI…MQVT, AKGQ…LNVT, AWGK…LNVA, and MKGK…LNIN. Disordered stretches follow at residues 1623–1688, 1752–1779, and 1791–1890; these read HATQ…KEES, TLSD…QNRA, and DAEK…NADG. The span at 1625 to 1634 shows a compositional bias: polar residues; the sequence is TQNPAAQNAL. The segment covering 1635 to 1654 has biased composition (basic and acidic residues); that stretch reads SDKERAEADRQRLEQEKQKQ. A compositionally biased stretch (polar residues) spans 1660 to 1679; that stretch reads GSQSQLESTDQQALENNGQA. The span at 1791–1815 shows a compositional bias: basic and acidic residues; that stretch reads DAEKRKADALAKGKDAQQAESDAHH. Positions 1879–1888 are enriched in polar residues; sequence HVNTDSQTNA. Residues 1988 to 2422 form the ACD domain; that stretch reads VPGFKSHFAS…HAEQWAKITA (435 aa). 1999–2003 is a binding site for ATP; sequence SIGIE. Mg(2+) is bound by residues Glu-2003, Glu-2065, and Gln-2149. Arg-2255 contacts ATP. Mg(2+) is bound at residue Glu-2326. The membrane localization region (MLD) stretch occupies residues 2574 to 2658; that stretch reads ELMSVTELLD…SLLNQVNTRL (85 aa). A rho inactivation domain (RID) region spans residues 2734–3098; it reads EYGQTVADTI…HQVTDVLDAL (365 aa). Residues 3195 to 3310 form an ABH effector region region; the sequence is VVLFLHGSGS…MPSMTKAITA (116 aa). The disordered stretch occupies residues 3404–3426; it reads ASVDEDLDQQGLDTTSTKDQGIS. The span at 3414–3426 shows a compositional bias: polar residues; it reads GLDTTSTKDQGIS. The region spanning 3462–3646 is the Peptidase C80 domain; it reads PTTDGGETRF…AENNKVSLSW (185 aa). 1D-myo-inositol hexakisphosphate is bound by residues 3468 to 3470, 3495 to 3496, and Arg-3526; these read ETR and KH. His-3532 functions as the For cysteine protease activity in the catalytic mechanism. Ser-3577 serves as a coordination point for 1D-myo-inositol hexakisphosphate. The active-site Nucleophile; for cysteine protease activity is Cys-3581. 1D-myo-inositol hexakisphosphate-binding positions include 3610–3612, 3623–3624, Lys-3636, and Lys-3641; these read SVR and RK.

Mg(2+) serves as cofactor.

Its subcellular location is the secreted. It is found in the host cytoplasm. The protein localises to the host cytosol. It localises to the host cell membrane. It carries out the reaction L-lysyl-/S-(2E,6E,10E)-geranylgeranyl-L-cysteinyl-[protein] + hexadecanoyl-CoA = N(6)-hexadecanoyl-L-lysyl-/S-(2E,6E,10E)-geranylgeranyl-L-cysteinyl-[protein] + CoA + H(+). It catalyses the reaction L-lysyl-/S-(2E,6E,10E)-geranylgeranyl-L-cysteinyl-[protein] + dodecanoyl-CoA = N(6)-dodecanoyl-L-lysyl-/S-(2E,6E,10E)-geranylgeranyl-L-cysteinyl-[protein] + CoA + H(+). The catalysed reaction is L-lysyl-/S-(2E,6E,10E)-geranylgeranyl-L-cysteinyl-[protein] + decanoyl-CoA = N(6)-decanoyl-L-lysyl-/S-(2E,6E,10E)-geranylgeranyl-L-cysteinyl-[protein] + CoA + H(+). Its activity is regulated as follows. Protease activity is inhibited by N-ethylmaleimide but not other protease inhibitors. Protease activity is inhibited by aza-leucine epoxide. Protease activity is activated upon binding inositol hexakisphosphate (InsP6) via an allosteric mechanism: the active site is disordered or occluded in the absence of InsP6, protecting the protease active-site sulfhydryl until the toxin enters a eukaryotic cell. Upon processing at the Leu-3441-Ala-3442 site, the peptidase C80 domain is converted to a form with much reduced affinity for InsP6, but is reactivated for high affinity binding of InsP6 by cooperative binding of both a new substrate and InsP6. Reactivation allows cleavage at other sites, specifically at Leu residues between the effector domains. Functionally, precursor of a multifunctional toxin that causes destruction of the actin cytoskeleton by covalent cross-linking of actin and inactivation of Rho GTPases when translocated into the host cytoplasm. Upon translocation into the host cell, undergoes autoprocessing in cis mediated by the peptidase C80 domain (also named CPD domain): the protease activity is activated upon binding inositol hexakisphosphate (InsP6) present at the host cell membrane and delivers the Cysteine protease domain-containing toxin F3 chain to the host cytosol. The Cysteine protease domain-containing toxin F3 chain will then further cleave and release effector toxin chains that cause disassembly of the actin cytoskeleton and enhance V.cholerae colonization of the small intestine, possibly by facilitating evasion of phagocytic cells. Its function is as follows. Following autocatalytic cleavage in cis at the Leu-3441-Ala-3442 site, this chain mediates processing in trans to release other individual toxin chains to the host cytosol. Released effector toxin chains cause disassembly of the actin cytoskeleton and enhance V.cholerae colonization of the small intestine, possibly by facilitating evasion of phagocytic cells. Actin-directed toxin that catalyzes the covalent cross-linking of host cytoplasmic monomeric actin. Mediates the cross-link between 'Lys-50' of one monomer and 'Glu-270' of another actin monomer, resulting in formation of highly toxic actin oligomers that cause cell rounding. The toxin can be highly efficient at very low concentrations by acting on formin homology family proteins: toxic actin oligomers bind with high affinity to formins and adversely affect both nucleation and elongation abilities of formins, causing their potent inhibition in both profilin-dependent and independent manners. Acts as an acid--amino-acid ligase that transfers the gamma-phosphoryl group of ATP to the 'Glu-270' actin residue, resulting in the formation of an activated acyl phosphate intermediate. This intermediate is further hydrolyzed and the energy of hydrolysis is utilized for the formation of the amide bond between actin subunits. In terms of biological role, N-epsilon-fatty acyltransferase that mediates lysine-palmitoylation of host Rho GTPase proteins, with a strong preference for host Rac1. After delivery to the host cytosol, localizes to the host cell membrane where it palmitoylates host Rho GTPase proteins, resulting in loss of all active GTP-bound Rho and subsequent actin depolymerization. Prenylation of host Rac1 at the C-terminus is required for lysine-palmitoylation. Functionally, indirectly activates the small GTPase CDC42. The sequence is that of Multifunctional-autoprocessing repeats-in-toxin from Vibrio cholerae serotype O1 (strain ATCC 39315 / El Tor Inaba N16961).